The chain runs to 229 residues: 23 kDa piroplasm membrane protein (229 aa).

Positions 1–19 (MNKYFKVFFFVLLTHALKS) are cleaved as a signal peptide. Over 20–203 (SLIFGQATLQ…EKEETSKKKY (184 aa)) the chain is Extracellular. Residues 204 to 224 (VLMVVVVVVFVVVASLVVFLV) traverse the membrane as a helical segment. Topologically, residues 225-229 (KFCLK) are cytoplasmic.

It is found in the membrane. This Theileria annulata protein is 23 kDa piroplasm membrane protein.